The sequence spans 245 residues: Flavin-dependent thymidylate synthase (245 aa).

One can recognise a ThyX domain in the interval 5–210 (IRVKLVNYTK…ELRPIIKWAK (206 aa)). Residues Ser59, 83–85 (RHR), and Gln91 each bind FAD. Residues 80–83 (QLVR), 91–95 (QQSQR), and Arg149 contribute to the dUMP site. Residues 83 to 93 (RHRLASYTQQS) carry the ThyX motif motif. FAD-binding positions include 165–167 (NLR) and His171. Residue Arg176 coordinates dUMP. The Involved in ionization of N3 of dUMP, leading to its activation role is filled by Arg176.

Belongs to the thymidylate synthase ThyX family. As to quaternary structure, homotetramer. Requires FAD as cofactor.

It catalyses the reaction dUMP + (6R)-5,10-methylene-5,6,7,8-tetrahydrofolate + NADPH + H(+) = dTMP + (6S)-5,6,7,8-tetrahydrofolate + NADP(+). Its pathway is pyrimidine metabolism; dTTP biosynthesis. Its function is as follows. Catalyzes the reductive methylation of 2'-deoxyuridine-5'-monophosphate (dUMP) to 2'-deoxythymidine-5'-monophosphate (dTMP) while utilizing 5,10-methylenetetrahydrofolate (mTHF) as the methyl donor, and NADPH and FADH(2) as the reductant. The polypeptide is Flavin-dependent thymidylate synthase (Thermococcus kodakarensis (strain ATCC BAA-918 / JCM 12380 / KOD1) (Pyrococcus kodakaraensis (strain KOD1))).